Reading from the N-terminus, the 95-residue chain is MYAVVKSGGKQYRVRQGDELLVERLAGEVGDRVELPVSLRAEEGVLDLEPRTARAEILEHLRGEKLKVYKYKPKKGYRRKKGHRQALTRIRVVEV.

This sequence belongs to the bacterial ribosomal protein bL21 family. As to quaternary structure, part of the 50S ribosomal subunit. Contacts protein L20.

Its function is as follows. This protein binds to 23S rRNA in the presence of protein L20. The chain is Large ribosomal subunit protein bL21 from Rubrobacter xylanophilus (strain DSM 9941 / JCM 11954 / NBRC 16129 / PRD-1).